A 247-amino-acid chain; its full sequence is Fasciclin-like arabinogalactan protein 13 (247 aa).

The first 25 residues, Met-1–Ala-25, serve as a signal peptide directing secretion. One can recognise an FAS1 domain in the interval Pro-34–Leu-179. N-linked (GlcNAc...) asparagine glycans are attached at residues Asn-36, Asn-55, Asn-68, Asn-141, and Asn-150. Positions Lys-189–Met-228 are disordered. Gly-224 is lipidated: GPI-anchor amidated glycine. A propeptide spans Ser-225 to Leu-247 (removed in mature form).

This sequence belongs to the fasciclin-like AGP family.

The protein resides in the cell membrane. Functionally, may be a cell surface adhesion protein. This is Fasciclin-like arabinogalactan protein 13 (FLA13) from Arabidopsis thaliana (Mouse-ear cress).